Reading from the N-terminus, the 429-residue chain is MANVTVVGAQWGDEGKGKIVDWLAERADVVVRFQGGHNAGHTLVVNGVTYKLSLLPSGVVSGTLSIIGNGVVIDPWHFRDEMERLRKQDVVITPDTLAIAETSPLILPLHSELDGFREDRSGDKKIGTTRRGIGPAYEDKVGRRAIRVCDLAHIDEIGSRLDRLIAHHNALRSGFGKPPVDREKLVNDLKEIAGCILPFAKPAWRILADEQKKNRRILFEGAQGVMLDIDHGTYPYVTSSNTIAGSAAGGSGMGASAVGFVLGIAKAYTTRVGAGPFPTELDDEVGQTLGERGHEFGTVTGRRRRCGWFDSVLMRQSVAVAGITGIALTKLDVLDGFDEIKICTGYKIGDKVYDYLPPYYKDQAAAKPVYETIEGWKESTAGARSWSELPAQAIKYIRRIEELIECPITLVSTSPEREDTILVKDPFLG.

GTP-binding positions include 12 to 18 (GDEGKGK) and 40 to 42 (GHT). D13 (proton acceptor) is an active-site residue. Mg(2+) is bound by residues D13 and G40. Residues 13-16 (DEGK), 38-41 (NAGH), T129, R143, Q223, T238, and R302 contribute to the IMP site. Residue H41 is the Proton donor of the active site. 298-304 (TVTGRRR) serves as a coordination point for substrate. Residues R304, 330 to 332 (KLD), and 412 to 414 (STS) contribute to the GTP site.

Belongs to the adenylosuccinate synthetase family. Homodimer. The cofactor is Mg(2+).

Its subcellular location is the cytoplasm. The enzyme catalyses IMP + L-aspartate + GTP = N(6)-(1,2-dicarboxyethyl)-AMP + GDP + phosphate + 2 H(+). The protein operates within purine metabolism; AMP biosynthesis via de novo pathway; AMP from IMP: step 1/2. In terms of biological role, plays an important role in the de novo pathway of purine nucleotide biosynthesis. Catalyzes the first committed step in the biosynthesis of AMP from IMP. In Zymomonas mobilis subsp. mobilis (strain ATCC 31821 / ZM4 / CP4), this protein is Adenylosuccinate synthetase.